We begin with the raw amino-acid sequence, 248 residues long: MYKLVLVRHGESEWNKENLFTGWTDVKLSDKGIDEAVEAGLLLKQEGYSFDIAFSSLLSRANDTLNIILRELGQSYISVKKTWRLNERHYGALQGLNKSETAAKYGEDKVLIWRRSYDVPPMSLDESDDRHPIKDPRYKHIPKRELPSTECLKDTVARVIPYWTDEIAKEVLEGKKVIVAAHGNSLRALVKYFDNLSEEDVLKLNIPTGIPLVYELDKDLNPIKHYYLGDESKIKKAMESVASQGKLK.

Residues 8–15 (RHGESEWN), 21–22 (TG), R60, 87–90 (ERHY), K98, 114–115 (RR), and 183–184 (GN) each bind substrate. The active-site Tele-phosphohistidine intermediate is H9. Residue E87 is the Proton donor/acceptor of the active site.

The protein belongs to the phosphoglycerate mutase family. BPG-dependent PGAM subfamily.

The catalysed reaction is (2R)-2-phosphoglycerate = (2R)-3-phosphoglycerate. It participates in carbohydrate degradation; glycolysis; pyruvate from D-glyceraldehyde 3-phosphate: step 3/5. In terms of biological role, catalyzes the interconversion of 2-phosphoglycerate and 3-phosphoglycerate. The sequence is that of 2,3-bisphosphoglycerate-dependent phosphoglycerate mutase from Borreliella burgdorferi (strain ATCC 35210 / DSM 4680 / CIP 102532 / B31) (Borrelia burgdorferi).